The primary structure comprises 438 residues: Aspartyl protease 25 (438 aa).

An N-terminal signal peptide occupies residues 1-23 (MAATTTIPLLLLLLAATVAAAAA). One can recognise a Peptidase A1 domain in the interval 79-433 (YVVRAGLGSP…DVANSRVGFA (355 aa)). Aspartate 97 is a catalytic residue. Residues cysteine 107 and cysteine 113 are joined by a disulfide bond. Asparagine 123, asparagine 193, and asparagine 282 each carry an N-linked (GlcNAc...) asparagine glycan. Residue aspartate 313 is part of the active site. Cysteine 352 and cysteine 394 are disulfide-bonded.

Belongs to the peptidase A1 family.

Functionally, anther-specific aspartic protease involved in tapetal programmed cell death (PCD). Directly regulated by the transcription factor EAT1/DTD in anthers during tapetum PCD and degeneration. This chain is Aspartyl protease 25, found in Oryza sativa subsp. japonica (Rice).